An 844-amino-acid chain; its full sequence is Probable inorganic carbon transporter subunit DabA 1 (844 aa).

C359, D361, H543, and C558 together coordinate Zn(2+).

This sequence belongs to the inorganic carbon transporter (TC 9.A.2) DabA family. In terms of assembly, forms a complex with DabB. It depends on Zn(2+) as a cofactor.

It localises to the cell inner membrane. Part of an energy-coupled inorganic carbon pump. In Bradyrhizobium sp. (strain BTAi1 / ATCC BAA-1182), this protein is Probable inorganic carbon transporter subunit DabA 1.